Here is a 1822-residue protein sequence, read N- to C-terminus: ADP-ribosylation factor guanine nucleotide-exchange factor sec72 (1822 aa).

Disordered regions lie at residues 1–54 (MQDA…NGMD) and 66–126 (DAVV…RASL). Ser44 is modified (phosphoserine). Residues 72-84 (DINTEDSSLSPAK) show a composition bias toward polar residues. Residues 85 to 110 (QENEKSPEGIEQKYQEEDLKDDKKSN) are compositionally biased toward basic and acidic residues. A phosphoserine mark is found at Ser122 and Ser125. Residues 547 to 551 (NYDCD) carry the HUS box motif. Phosphothreonine is present on Thr597. Ser653 is modified (phosphoserine). Thr654 is subject to Phosphothreonine. A Phosphoserine modification is found at Ser669. The SEC7 domain occupies 701–889 (QFESNKQRKK…GFVYDDILKN (189 aa)). An HDS1 domain region spans residues 898–1106 (ELAAIAPLMN…NARVRRKNVN (209 aa)). Ser1110 carries the post-translational modification Phosphoserine. 2 disordered regions span residues 1111 to 1131 (NSIR…SLSK) and 1584 to 1610 (ENEN…TSSI). 2 stretches are compositionally biased toward low complexity: residues 1117-1130 (SGST…RSLS) and 1597-1610 (SLPE…TSSI). Ser1606 and Ser1609 each carry phosphoserine.

Its subcellular location is the cytoplasm. It is found in the golgi apparatus. The protein localises to the trans-Golgi network. It localises to the cytoplasmic vesicle. The protein resides in the COPI-coated vesicle membrane. Its subcellular location is the COPII-coated vesicle membrane. Guanine exchange factor that acts as an activator of arf1 at the trans-Golgi net-work and is thus involved in vesicular budding and traffic between compartments of the Golgi apparatus. Activation of Arf (ADP-ribosylation factor) GTPases is essential for vesicle formation via recruitment of cargo adapters and coat proteins necessary for Golgi trafficking. Involved in the resistance to tamoxifen (TAM), an anticancer drug used to treat estrogen receptor (ER)-positive breast cancer. This Schizosaccharomyces pombe (strain 972 / ATCC 24843) (Fission yeast) protein is ADP-ribosylation factor guanine nucleotide-exchange factor sec72.